The chain runs to 286 residues: Eukaryotic translation initiation factor 3 subunit F-2 (286 aa).

One can recognise an MPN domain in the interval Ile11–Gly147.

Belongs to the eIF-3 subunit F family. Component of the eukaryotic translation initiation factor 3 (eIF-3) complex. The eIF-3 complex interacts with pix.

The protein localises to the cytoplasm. Component of the eukaryotic translation initiation factor 3 (eIF-3) complex, which is involved in protein synthesis of a specialized repertoire of mRNAs and, together with other initiation factors, stimulates binding of mRNA and methionyl-tRNAi to the 40S ribosome. The eIF-3 complex specifically targets and initiates translation of a subset of mRNAs involved in cell proliferation. The protein is Eukaryotic translation initiation factor 3 subunit F-2 of Drosophila willistoni (Fruit fly).